The following is a 348-amino-acid chain: Growth-regulating factor 5 (348 aa).

The QLQ domain maps to 24 to 59; sequence VFTAAQWAELEQQALIYKYLVAGVPVPGDLLLPIRP. 2 consecutive short sequence motifs (bipartite nuclear localization signal) follow at residues 94–112 and 130–137; these read KKLD…KKWR and RGRNRSRK. The region spanning 97 to 141 is the WRC domain; that stretch reads DPEPWRCRRTDGKKWRCSKEAHPDSKYCERHMHRGRNRSRKPVES. Disordered stretches follow at residues 125 to 165 and 306 to 348; these read ERHM…HDTD and LRPF…PRCD. Basic residues predominate over residues 127-136; that stretch reads HMHRGRNRSR. Residues 148–161 show a composition bias toward polar residues; it reads PQSQPQLSNVTTAT. Residues 306–320 are compositionally biased toward basic and acidic residues; the sequence is LRPFFDEWPGRRDSW. Positions 329-340 are enriched in polar residues; the sequence is NQTSFSTTQLSI.

It belongs to the GRF family.

Its subcellular location is the nucleus. Its function is as follows. Transcription activator that plays a regulatory role in gibberellin-induced stem elongation. This chain is Growth-regulating factor 5 (GRF5), found in Oryza sativa subsp. japonica (Rice).